The primary structure comprises 437 residues: tRNA-queuosine alpha-mannosyltransferase (437 aa).

This sequence belongs to the glycosyltransferase group 1 family. Glycosyltransferase 4 subfamily.

It localises to the cytoplasm. The protein resides in the nucleus. It carries out the reaction queuosine(34) in tRNA(Asp) + GDP-alpha-D-mannose = O-4''-alpha-D-mannosylqueuosine(34) in tRNA(Asp) + GDP + H(+). Glycosyltransferase that specifically catalyzes mannosylation of cytoplasmic tRNA(Asp) modified with queuosine at position 34 (queuosine(34)). Mannosylates the cyclopentene moiety of queuosine(34) in tRNA(Asp) to form mannosyl-queuosine(34). Mannosylation of queuosine(34) in tRNA(Asp) is required to slow-down elongation at cognate codons, GAC and GAU, thereby regulating protein translation. The chain is tRNA-queuosine alpha-mannosyltransferase (gtdc1) from Xenopus laevis (African clawed frog).